A 582-amino-acid polypeptide reads, in one-letter code: BTB/POZ domain and ankyrin repeat-containing protein NPR1 (582 aa).

Over residues Met1 to Ala18 the composition is skewed to polar residues. The interval Met1–Ala25 is disordered. Residues Ala55 to Val140 form the BTB domain. The segment at Ala147–His161 adopts a C2HC NPR-type zinc-finger fold. Cys150, Cys155, His157, and Cys160 together coordinate Zn(2+). ANK repeat units lie at residues Arg229 to Leu258, Lys269 to Asp299, Phe301 to His328, and Arg332 to Asp361. The segment at Pro391–Thr526 is salicylic acid-binding core (SBC). Arg436 lines the salicylate pocket. Residues Gln551–Arg582 are disordered. A compositionally biased stretch (basic and acidic residues) spans Ala553–Arg563. Residues Ser564–Ser574 show a composition bias toward low complexity.

Belongs to the plant 'ANKYRIN-BTB/POZ' family. 'NPR1-like' subfamily. Oligomer in an uninduced state; disulfide-linked. Forms activated monomer upon changes in cellular redox potential. Interacts with TGA2.1, TGA2.2, TGA2.3, LG2, TGAL1 and TGAL4. Interacts with NRR, RH1, RH2 and RH3.

It is found in the cytoplasm. It localises to the nucleus. The protein localises to the nuclear body. The protein operates within protein modification; protein ubiquitination. Its function is as follows. Salicylic acid (SA)-binding substrate-specific adapter of an E3 ubiquitin-protein ligase complex (CUL3-RBX1-BTB) which mediates the ubiquitination and subsequent proteasomal degradation of target proteins. Transcription cofactor that represses gene expression in the absence of salicylic acid (SA), when attached to negative cis-elements (W-box) with WRKY transcription factors, but stimulates gene expression upon activation by SA, when sumoylated and attached to positive cis-elements (as-1) with TGA transcription factors, thus confering immunity through a series of gene regulations ending in a significant increase in antimicrobial and defense genes expression. Key positive factor of disease resistance. Plays an essential role in benzothiadiazole (BTH)-induced resistance to the blast fungus disease caused by Magnaporthe oryzae. Involved in defense response against the bacterial blight disease caused by Xanthomonas oryzae pv. oryzae (Xoo). Over-expression of NPR1/NH1 confers disease resistance to Xoo, but also enhances herbivore susceptibility. Functions as a transcriptional coactivator of TGA2.1 and LG2 in vitro. Involved in defense response against herbivore. Plants silencing NPR1/NH1 have increased herbivore-induced trypsin proteinase inhibitors and volatiles, which reduces the performance of the striped stem borer (SSB) Chilo suppressalis. This Oryza sativa subsp. japonica (Rice) protein is BTB/POZ domain and ankyrin repeat-containing protein NPR1.